The primary structure comprises 246 residues: Proteasome subunit alpha type-5 (246 aa).

This sequence belongs to the peptidase T1A family. The 26S proteasome consists of a 20S proteasome core and two 19S regulatory subunits. The 20S proteasome core is composed of 28 subunits that are arranged in four stacked rings, resulting in a barrel-shaped structure. The two end rings are each formed by seven alpha subunits, and the two central rings are each formed by seven beta subunits. The catalytic chamber with the active sites is on the inside of the barrel.

It localises to the cytoplasm. The protein localises to the nucleus. The proteasome is a multicatalytic proteinase complex which is characterized by its ability to cleave peptides with Arg, Phe, Tyr, Leu, and Glu adjacent to the leaving group at neutral or slightly basic pH. The proteasome has an ATP-dependent proteolytic activity. This is Proteasome subunit alpha type-5 from Trypanosoma brucei brucei.